The following is a 189-amino-acid chain: Interferon alpha-A (189 aa).

Positions 1–23 are cleaved as a signal peptide; it reads MAPAWSFLLSLLLLSCNAICSLG. 2 disulfide bridges follow: Cys24–Cys122 and Cys52–Cys162.

It belongs to the alpha/beta interferon family.

The protein resides in the secreted. Its function is as follows. Produced by macrophages, IFN-alpha have antiviral activities. Interferon stimulates the production of two enzymes: a protein kinase and an oligoadenylate synthetase. This Bos taurus (Bovine) protein is Interferon alpha-A (IFNAA).